The following is a 414-amino-acid chain: Serine hydroxymethyltransferase (414 aa).

Residues leucine 116 and 120-122 (GHL) each bind (6S)-5,6,7,8-tetrahydrofolate. Lysine 224 is modified (N6-(pyridoxal phosphate)lysine). (6S)-5,6,7,8-tetrahydrofolate is bound by residues glutamate 240 and 348–350 (SPF).

The protein belongs to the SHMT family. In terms of assembly, homodimer. Requires pyridoxal 5'-phosphate as cofactor.

Its subcellular location is the cytoplasm. It catalyses the reaction (6R)-5,10-methylene-5,6,7,8-tetrahydrofolate + glycine + H2O = (6S)-5,6,7,8-tetrahydrofolate + L-serine. Its pathway is one-carbon metabolism; tetrahydrofolate interconversion. The protein operates within amino-acid biosynthesis; glycine biosynthesis; glycine from L-serine: step 1/1. Catalyzes the reversible interconversion of serine and glycine with tetrahydrofolate (THF) serving as the one-carbon carrier. This reaction serves as the major source of one-carbon groups required for the biosynthesis of purines, thymidylate, methionine, and other important biomolecules. Also exhibits THF-independent aldolase activity toward beta-hydroxyamino acids, producing glycine and aldehydes, via a retro-aldol mechanism. In Campylobacter concisus (strain 13826), this protein is Serine hydroxymethyltransferase.